A 500-amino-acid chain; its full sequence is Glutamate--tRNA ligase (500 aa).

Residues 12–22 (PSPTGHLHIGN) carry the 'HIGH' region motif. Residues 259 to 263 (KLSKR) carry the 'KMSKS' region motif. K262 provides a ligand contact to ATP.

The protein belongs to the class-I aminoacyl-tRNA synthetase family. Glutamate--tRNA ligase type 1 subfamily. In terms of assembly, monomer.

It localises to the cytoplasm. The enzyme catalyses tRNA(Glu) + L-glutamate + ATP = L-glutamyl-tRNA(Glu) + AMP + diphosphate. Catalyzes the attachment of glutamate to tRNA(Glu) in a two-step reaction: glutamate is first activated by ATP to form Glu-AMP and then transferred to the acceptor end of tRNA(Glu). The sequence is that of Glutamate--tRNA ligase from Lactobacillus delbrueckii subsp. bulgaricus (strain ATCC BAA-365 / Lb-18).